Consider the following 447-residue polypeptide: Beclin-1 (447 aa).

Residues 105–124 (TMENLSRRLKVTSNLFDIMS) carry the BH3 motif. Residues 109 to 156 (LSRRLKVTSNLFDIMSGQTDIDHPLCEECTDTLLDHLDTQLNITENEC) form an interaction with BCL2 and BCL2L1 isoform Bcl-X(L) region. Residues 140 to 214 (TLLDHLDTQL…VAKELDEGRN (75 aa)) adopt a coiled-coil conformation. Residues 242–447 (DDLKSVDNQM…AWVSSQFYNR (206 aa)) form an evolutionary conserved domain (ECD) region. Residue lysine 399 forms a Glycyl lysine isopeptide (Lys-Gly) (interchain with G-Cter in ubiquitin) linkage. Residues 422-447 (WTKALKFMLTNLKWGLAWVSSQFYNR) are required for membrane-association.

It belongs to the beclin family. Component of the PI3K (PI3KC3/PI3K-III/class III phosphatidylinositol 3-kinase) complex. Interacts with the poly-Gln domain of ATXN3; the interaction causes deubiquitination at Lys-399 and stabilizes BECN1. Post-translationally, polyubiquitinated at Lys-399 with 'Lys-48'-linkages. 'Lys-48'-linked polyubiquitination of Lys-399 leads to degradation. Deubiquitinated by ATXN3, leading to stabilization.

It is found in the cytoplasm. Its subcellular location is the golgi apparatus. The protein localises to the trans-Golgi network membrane. It localises to the endosome membrane. The protein resides in the endoplasmic reticulum membrane. It is found in the mitochondrion membrane. Its subcellular location is the endosome. The protein localises to the cytoplasmic vesicle. It localises to the autophagosome. In terms of biological role, plays a central role in autophagy. Acts as a core subunit of different PI3K complex forms that mediate formation of phosphatidylinositol 3-phosphate and are believed to play a role in multiple membrane trafficking pathways: PI3KC3-C1 is involved in initiation of autophagosomes and PI3KC3-C2 in maturation of autophagosomes and endocytosis. Involved in regulation of degradative endocytic trafficking and required for the abscission step in cytokinesis, probably in the context of PI3KC3-C2. Essential for the formation of PI3KC3-C2 but not PI3KC3-C1 PI3K complex forms. Involved in endocytosis including endosome formation in neuronal cells. This Danio rerio (Zebrafish) protein is Beclin-1 (becn1).